The following is a 597-amino-acid chain: Tubulin polyglutamylase ttll-4 (597 aa).

Positions 1–18 are enriched in polar residues; that stretch reads MSSGYSSAPSVSHTSSEA. Disordered regions lie at residues 1 to 39 and 80 to 107; these read MSSG…DEQR and SKSK…FLKS. The segment covering 26–35 has biased composition (acidic residues); it reads YEDGVDEEAS. The TTL domain occupies 134 to 472; sequence QSRLTWCHNS…HVPPSFDKLH (339 aa). ATP is bound by residues K250, 256-257, 278-281, and 291-293; these read RG, QHYI, and KFD. R256 provides a ligand contact to a protein. R317 is a binding site for L-glutamate. 338-339 lines the ATP pocket; that stretch reads TN. Positions 340, 341, and 358 each coordinate L-glutamate. 3 residues coordinate Mg(2+): D418, E431, and N433. An L-glutamate-binding site is contributed by K449.

Belongs to the tubulin--tyrosine ligase family. Mg(2+) is required as a cofactor.

It catalyses the reaction L-glutamyl-[protein] + L-glutamate + ATP = gamma-L-glutamyl-L-glutamyl-[protein] + ADP + phosphate + H(+). In terms of biological role, monoglutamylase which modifies tubulin, adding a single glutamate on the gamma-carboxyl group of specific glutamate residues of target proteins. Involved in the side-chain initiation step of the polyglutamylation reaction but not in the elongation step. Preferentially modifies beta-tail tubulin over the alpha-tubulin. Involved in side-chain glutamylation of tubulin in sensory cilia. Together with ttll-5 and ttll-11, required for male mating. The protein is Tubulin polyglutamylase ttll-4 (ttll-4) of Caenorhabditis briggsae.